The chain runs to 881 residues: Low-affinity phosphate transporter PHO90 (881 aa).

Residues 1–288 (MRFSHFLKYN…HLNTRTELIE (288 aa)) form the SPX domain. A run of 12 helical transmembrane segments spans residues 417-437 (IYFI…NDAA), 456-476 (AIPL…FKVL), 493-513 (ILAA…TLGE), 514-534 (VLAQ…FAGC), 539-559 (VLLM…NVAA), 581-601 (AQAL…SSPI), 663-683 (FTVK…LWCV), 691-711 (FGSS…TGLL), 718-738 (AFPW…KAVS), 758-778 (GVFA…TFVS), 805-825 (ILVF…SSGF), and 854-874 (ASIL…ASVV).

Belongs to the CitM (TC 2.A.11) transporter family.

It localises to the membrane. Low-affinity phosphate transporter involved in the control of cellular phosphate levels. The sequence is that of Low-affinity phosphate transporter PHO90 (PHO90) from Saccharomyces cerevisiae (strain ATCC 204508 / S288c) (Baker's yeast).